A 1368-amino-acid chain; its full sequence is DNA-directed RNA polymerase subunit beta (1368 aa).

Belongs to the RNA polymerase beta chain family. As to quaternary structure, the RNAP catalytic core consists of 2 alpha, 1 beta, 1 beta' and 1 omega subunit. When a sigma factor is associated with the core the holoenzyme is formed, which can initiate transcription.

The enzyme catalyses RNA(n) + a ribonucleoside 5'-triphosphate = RNA(n+1) + diphosphate. In terms of biological role, DNA-dependent RNA polymerase catalyzes the transcription of DNA into RNA using the four ribonucleoside triphosphates as substrates. This is DNA-directed RNA polymerase subunit beta from Burkholderia ambifaria (strain ATCC BAA-244 / DSM 16087 / CCUG 44356 / LMG 19182 / AMMD) (Burkholderia cepacia (strain AMMD)).